Consider the following 205-residue polypeptide: uncharacterized protein (205 aa).

The 104-residue stretch at 26–129 folds into the HD domain; it reads DWHHVSRVAD…VQDADRLDAI (104 aa).

This is an uncharacterized protein from Bacillus subtilis (strain 168).